Reading from the N-terminus, the 208-residue chain is Small ribosomal subunit protein uS4 (208 aa).

Residues T97–E158 form the S4 RNA-binding domain.

It belongs to the universal ribosomal protein uS4 family. Part of the 30S ribosomal subunit. Contacts protein S5. The interaction surface between S4 and S5 is involved in control of translational fidelity.

One of the primary rRNA binding proteins, it binds directly to 16S rRNA where it nucleates assembly of the body of the 30S subunit. Its function is as follows. With S5 and S12 plays an important role in translational accuracy. In Xylella fastidiosa (strain 9a5c), this protein is Small ribosomal subunit protein uS4.